Consider the following 77-residue polypeptide: U10-lycotoxin-Ls1b (77 aa).

A signal peptide spans 1 to 20 (MKLIIFTGLVLFAIVSLIEA). The propeptide occupies 21 to 26 (EEESGR).

The protein belongs to the neurotoxin 19 (CSTX) family. 09 (U10-Lctx) subfamily. Contains 4 disulfide bonds. As to expression, expressed by the venom gland.

It localises to the secreted. This Lycosa singoriensis (Wolf spider) protein is U10-lycotoxin-Ls1b.